The following is a 266-amino-acid chain: Large ribosomal subunit protein uL4 (266 aa).

The protein belongs to the universal ribosomal protein uL4 family. In terms of assembly, part of the 50S ribosomal subunit.

Functionally, one of the primary rRNA binding proteins, this protein initially binds near the 5'-end of the 23S rRNA. It is important during the early stages of 50S assembly. It makes multiple contacts with different domains of the 23S rRNA in the assembled 50S subunit and ribosome. Its function is as follows. Forms part of the polypeptide exit tunnel. The sequence is that of Large ribosomal subunit protein uL4 from Sulfolobus acidocaldarius (strain ATCC 33909 / DSM 639 / JCM 8929 / NBRC 15157 / NCIMB 11770).